A 338-amino-acid polypeptide reads, in one-letter code: Uroporphyrinogen decarboxylase (338 aa).

Residues 23-27, aspartate 72, tyrosine 146, threonine 201, and histidine 312 contribute to the substrate site; that span reads RQAGR.

It belongs to the uroporphyrinogen decarboxylase family. Homodimer.

It is found in the cytoplasm. It carries out the reaction uroporphyrinogen III + 4 H(+) = coproporphyrinogen III + 4 CO2. It functions in the pathway porphyrin-containing compound metabolism; protoporphyrin-IX biosynthesis; coproporphyrinogen-III from 5-aminolevulinate: step 4/4. In terms of biological role, catalyzes the decarboxylation of four acetate groups of uroporphyrinogen-III to yield coproporphyrinogen-III. The polypeptide is Uroporphyrinogen decarboxylase (Thermodesulfovibrio yellowstonii (strain ATCC 51303 / DSM 11347 / YP87)).